Reading from the N-terminus, the 130-residue chain is Organ-specific protein P4 (130 aa).

2 tandem repeats follow at residues histidine 60 to isoleucine 85 and histidine 86 to isoleucine 111. The interval histidine 60 to isoleucine 111 is 2 X 26 AA tandem repeats. The segment at alanine 79–alanine 130 is disordered.

This sequence to organ specific protein S2. As to expression, expressed in pods.

The polypeptide is Organ-specific protein P4 (Pisum sativum (Garden pea)).